The chain runs to 59 residues: U-actitoxin-Aer2b (59 aa).

Post-translationally, contains 5 disulfide bonds.

The protein resides in the secreted. The protein localises to the nematocyst. This is U-actitoxin-Aer2b from Anemonia erythraea (Sea anemone).